A 386-amino-acid polypeptide reads, in one-letter code: EARP and GARP complex-interacting protein 1 (386 aa).

Met1 carries the post-translational modification N-acetylmethionine. WD repeat units follow at residues 132–172, 182–222, 226–266, and 270–310; these read GAQG…SQAV, RGQL…QIYC, AHGQ…EPVK, and EHSH…SEPF. Residues 312-332 form a disordered region; the sequence is HLVDDDDVSDPEEHHTEKSKE. Ser320 is subject to Phosphoserine. Residues 322-332 are compositionally biased toward basic and acidic residues; the sequence is PEEHHTEKSKE. The WD 5 repeat unit spans residues 344-384; sequence EHEDSVYAVDWASADPWLFASLSYDGRLVINRVPRALKYHI.

It belongs to the WD repeat EIPR1 family. As to quaternary structure, interacts with two multisubunit tethering complexes: EARP composed of VPS50, VPS51, VPS52 and VPS53 subunits and GARP complex composed of VPS51, VPS52, VPS53 and VPS54 subunits. Interacts with SNAP29. As to expression, ubiquitous. Highly expressed in brain, adipose tissue, spleen and kidney (at protein level).

It is found in the golgi apparatus. The protein localises to the trans-Golgi network. In terms of biological role, acts as a component of endosomal retrieval machinery that is involved in protein transport from early endosomes to either recycling endosomes or the trans-Golgi network. Mediates the recruitment of Golgi-associated retrograde protein (GARP) complex to the trans-Golgi network and controls early endosome-to-Golgi transport of internalized protein. Promotes the recycling of internalized transferrin receptor (TFRC) to the plasma membrane through interaction with endosome-associated recycling protein (EARP) complex. Controls proper insulin distribution and secretion, and retention of cargo in mature dense core vesicles. Required for the stability of the endosome-associated retrograde protein (EARP) complex subunits and for proper localization and association of EARP with membranes. The sequence is that of EARP and GARP complex-interacting protein 1 from Rattus norvegicus (Rat).